The primary structure comprises 166 residues: Regulator of ribonuclease activity A (166 aa).

It belongs to the RraA family. In terms of assembly, homotrimer. Binds to both RNA-binding sites in the C-terminal region of Rne and to RhlB.

It localises to the cytoplasm. Its function is as follows. Globally modulates RNA abundance by binding to RNase E (Rne) and regulating its endonucleolytic activity. Can modulate Rne action in a substrate-dependent manner by altering the composition of the degradosome. Modulates RNA-binding and helicase activities of the degradosome. In Glaesserella parasuis serovar 5 (strain SH0165) (Haemophilus parasuis), this protein is Regulator of ribonuclease activity A.